The primary structure comprises 204 residues: Protein LURP-one-related 14 (204 aa).

It belongs to the LOR family.

Its function is as follows. Might be related to the phospholipid scramblase and tubby-like superfamily of membrane tethered transcription factors. This chain is Protein LURP-one-related 14, found in Arabidopsis thaliana (Mouse-ear cress).